We begin with the raw amino-acid sequence, 187 residues long: Tumor necrosis factor ligand superfamily member 4 (187 aa).

The Cytoplasmic segment spans residues 1 to 23; it reads MEGVRPLEENVGNAPRPRFERNK. Residues 24–44 form a helical; Signal-anchor for type II membrane protein membrane-spanning segment; it reads LLLVASVVQALGLLLCLTYVC. The Extracellular segment spans residues 45 to 187; it reads QHSHAPEVSL…LQNPGGYCAP (143 aa). A THD domain is found at 58–177; it reads PIENIMTQLQ…SVNAGELIVI (120 aa). 2 disulfide bridges follow: cysteine 74–cysteine 164 and cysteine 101–cysteine 185. 2 N-linked (GlcNAc...) asparagine glycosylation sites follow: asparagine 94 and asparagine 156.

It belongs to the tumor necrosis factor family. In terms of assembly, homotrimer.

It is found in the membrane. In terms of biological role, cytokine that binds to TNFRSF4. Co-stimulates T-cell proliferation and cytokine production. The polypeptide is Tumor necrosis factor ligand superfamily member 4 (TNFSF4) (Oryctolagus cuniculus (Rabbit)).